Here is a 124-residue protein sequence, read N- to C-terminus: UPF0482 protein YPK_1977 (124 aa).

The signal sequence occupies residues 1 to 32; the sequence is MMKINNLPRLIRAFLPATLLMLPLVWQTPALA. The tract at residues 47-69 is disordered; sequence GGNNDPMSKEQARQSQQQWDETN.

The protein belongs to the UPF0482 family.

The chain is UPF0482 protein YPK_1977 from Yersinia pseudotuberculosis serotype O:3 (strain YPIII).